Consider the following 247-residue polypeptide: ATP synthase subunit a, chloroplastic (247 aa).

5 helical membrane-spanning segments follow: residues 38–58 (QVLITSWVVIAILLGSVTIAV), 95–115 (VPFIGTMFLFIFVSNWSGALF), 134–154 (INTTVALALPTSVAYFYAGLT), 199–219 (LVVVVLVSLVPSVVPIPVMFL), and 220–240 (GLFTSGIQALIFATLAAAYIG).

Belongs to the ATPase A chain family. In terms of assembly, F-type ATPases have 2 components, CF(1) - the catalytic core - and CF(0) - the membrane proton channel. CF(1) has five subunits: alpha(3), beta(3), gamma(1), delta(1), epsilon(1). CF(0) has four main subunits: a, b, b' and c.

It is found in the plastid. The protein resides in the chloroplast thylakoid membrane. Functionally, key component of the proton channel; it plays a direct role in the translocation of protons across the membrane. The protein is ATP synthase subunit a, chloroplastic of Piper cenocladum (Ant piper).